The chain runs to 160 residues: Ribosomal RNA large subunit methyltransferase H (160 aa).

S-adenosyl-L-methionine-binding residues include leucine 77 and glycine 109.

It belongs to the RNA methyltransferase RlmH family. Homodimer.

The protein resides in the cytoplasm. The catalysed reaction is pseudouridine(1915) in 23S rRNA + S-adenosyl-L-methionine = N(3)-methylpseudouridine(1915) in 23S rRNA + S-adenosyl-L-homocysteine + H(+). Functionally, specifically methylates the pseudouridine at position 1915 (m3Psi1915) in 23S rRNA. The sequence is that of Ribosomal RNA large subunit methyltransferase H from Moorella thermoacetica (strain ATCC 39073 / JCM 9320).